A 141-amino-acid polypeptide reads, in one-letter code: Arsenate reductase (141 aa).

Cysteine 12 acts as the Nucleophile; cysteine thioarsenate intermediate in catalysis.

The protein belongs to the ArsC family.

The enzyme catalyses [glutaredoxin]-dithiol + arsenate + glutathione + H(+) = glutathionyl-S-S-[glutaredoxin] + arsenite + H2O. Involved in resistance to arsenate. Catalyzes the reduction of arsenate [As(V)] to arsenite [As(III)]. The protein is Arsenate reductase of Escherichia coli (strain K12).